Reading from the N-terminus, the 60-residue chain is Ixodegrin-like peptide (60 aa).

A signal peptide spans 1–19 (MNAVFIAALLILGTSTFDA). A Cell attachment site motif is present at residues 49-51 (RGD).

This sequence belongs to the ixodegrin family. Post-translationally, contains 3 disulfide bonds. As to expression, expressed in salivary glands.

It is found in the secreted. Functionally, tick salivary platelet aggregation inhibitor that plays an important part in the anti-hemostatic strategy of ticks. Inhibits platelet aggregation induced by ADP, thrombin and thromboxane A2 (TXA2). Blocks platelet adhesion to soluble collagen (most probably through the binding to alpha-2/beta-1 integrin (ITGA2/ITGB1)) and binds to purified glycoprotein IIb/IIIa (ITGA2B/ITGB3) in a dose-dependent manner. In vivo, reduces thrombus weight effectively in a rat arteriovenous shunt model and inhibits thrombosis in a carrageenan-induced mouse tail thrombosis model. This chain is Ixodegrin-like peptide, found in Ixodes scapularis (Black-legged tick).